Here is a 705-residue protein sequence, read N- to C-terminus: Elongation factor G 2 (705 aa).

The 283-residue stretch at 8 to 290 folds into the tr-type G domain; the sequence is ELYRNIGISA…AVLDYLPSPL (283 aa). GTP contacts are provided by residues 17–24, 88–92, and 142–145; these read AHIDAGKT, DTPGH, and NKMD.

It belongs to the TRAFAC class translation factor GTPase superfamily. Classic translation factor GTPase family. EF-G/EF-2 subfamily.

It is found in the cytoplasm. Functionally, catalyzes the GTP-dependent ribosomal translocation step during translation elongation. During this step, the ribosome changes from the pre-translocational (PRE) to the post-translocational (POST) state as the newly formed A-site-bound peptidyl-tRNA and P-site-bound deacylated tRNA move to the P and E sites, respectively. Catalyzes the coordinated movement of the two tRNA molecules, the mRNA and conformational changes in the ribosome. The chain is Elongation factor G 2 from Bordetella avium (strain 197N).